Here is a 340-residue protein sequence, read N- to C-terminus: Protein-arginine kinase (340 aa).

The Phosphagen kinase C-terminal domain occupies 14–244 (IVITTRIRLA…EQIINQENLS (231 aa)). Residues 17 to 21 (TTRIR), His81, Arg115, 166 to 170 (RASVM), and 197 to 202 (RGLWGE) each bind ATP.

The protein belongs to the ATP:guanido phosphotransferase family.

The enzyme catalyses L-arginyl-[protein] + ATP = N(omega)-phospho-L-arginyl-[protein] + ADP + H(+). Functionally, catalyzes the specific phosphorylation of arginine residues in proteins. This Clostridium acetobutylicum (strain ATCC 824 / DSM 792 / JCM 1419 / IAM 19013 / LMG 5710 / NBRC 13948 / NRRL B-527 / VKM B-1787 / 2291 / W) protein is Protein-arginine kinase.